A 201-amino-acid chain; its full sequence is Chromophore lyase CpcT/CpeT (201 aa).

It belongs to the CpcT/CpeT biliprotein lyase family.

It localises to the plastid. Its subcellular location is the organellar chromatophore. Functionally, covalently attaches a chromophore to Cys residue(s) of phycobiliproteins. The protein is Chromophore lyase CpcT/CpeT of Paulinella chromatophora.